A 457-amino-acid chain; its full sequence is Multidrug resistance protein MdtK (457 aa).

12 helical membrane passes run 11 to 31 (LLALAIPVILAQVAQTAMGFV), 53 to 73 (IWLPAILFGHGLLLALTPVVA), 93 to 113 (WLAGFVSVLIMVVLWNAGYII), 127 to 147 (AVGYLRALLWGAPGYLFFQVA), 160 to 180 (GMVMGFIGLLVNIPVNYIFIY), 191 to 211 (VGCGVATASVYWVMFASMLWW), 243 to 263 (LPIALALFFEVTLFAVVALLV), 276 to 296 (IALNFSSLMFVLPLSLAAAVT), 316 to 336 (RTGVGVGVCLAVFTAIFTVLM), 357 to 377 (LMLLAAIYQISDSIQVIGSGI), 387 to 407 (IFFITFTAYWVLGLPSGYLLA), and 418 to 438 (PAGFWCGFIIGLTSAAIMMML).

The protein belongs to the multi antimicrobial extrusion (MATE) (TC 2.A.66.1) family. MdtK subfamily.

The protein localises to the cell inner membrane. Functionally, multidrug efflux pump that functions probably as a Na(+)/drug antiporter. This Klebsiella pneumoniae subsp. pneumoniae (strain ATCC 700721 / MGH 78578) protein is Multidrug resistance protein MdtK.